The chain runs to 471 residues: ATP synthase subunit beta (471 aa).

Residue 153-160 (GGAGVGKT) participates in ATP binding.

Belongs to the ATPase alpha/beta chains family. As to quaternary structure, F-type ATPases have 2 components, CF(1) - the catalytic core - and CF(0) - the membrane proton channel. CF(1) has five subunits: alpha(3), beta(3), gamma(1), delta(1), epsilon(1). CF(0) has four main subunits: a(1), b(1), b'(1) and c(9-12).

Its subcellular location is the cell membrane. The enzyme catalyses ATP + H2O + 4 H(+)(in) = ADP + phosphate + 5 H(+)(out). Produces ATP from ADP in the presence of a proton gradient across the membrane. The catalytic sites are hosted primarily by the beta subunits. The protein is ATP synthase subunit beta of Chloroflexus aurantiacus (strain ATCC 29364 / DSM 637 / Y-400-fl).